The following is a 473-amino-acid chain: ATP synthase subunit beta, chloroplastic (473 aa).

G172–T179 provides a ligand contact to ATP.

This sequence belongs to the ATPase alpha/beta chains family. F-type ATPases have 2 components, CF(1) - the catalytic core - and CF(0) - the membrane proton channel. CF(1) has five subunits: alpha(3), beta(3), gamma(1), delta(1), epsilon(1). CF(0) has four main subunits: a(1), b(1), b'(1) and c(9-12).

It is found in the plastid. The protein resides in the chloroplast thylakoid membrane. The enzyme catalyses ATP + H2O + 4 H(+)(in) = ADP + phosphate + 5 H(+)(out). Produces ATP from ADP in the presence of a proton gradient across the membrane. The catalytic sites are hosted primarily by the beta subunits. The protein is ATP synthase subunit beta, chloroplastic of Equisetum arvense (Field horsetail).